The chain runs to 207 residues: GTP cyclohydrolase 1 (207 aa).

Zn(2+) is bound by residues Cys-94, His-97, and Cys-167.

This sequence belongs to the GTP cyclohydrolase I family. In terms of assembly, toroid-shaped homodecamer, composed of two pentamers of five dimers.

It catalyses the reaction GTP + H2O = 7,8-dihydroneopterin 3'-triphosphate + formate + H(+). It functions in the pathway cofactor biosynthesis; 7,8-dihydroneopterin triphosphate biosynthesis; 7,8-dihydroneopterin triphosphate from GTP: step 1/1. This Thermobifida fusca (strain YX) protein is GTP cyclohydrolase 1.